We begin with the raw amino-acid sequence, 184 residues long: Endothelial cell-specific molecule 1 (184 aa).

An N-terminal signal peptide occupies residues 1 to 19; it reads MKSVLLLTTLLVPAHLVAA. The IGFBP N-terminal domain occupies 24 to 102; that stretch reads YAVDCPQHCD…GEEFGICKDC (79 aa). Cystine bridges form between Cys-28-Cys-51, Cys-32-Cys-53, Cys-37-Cys-54, Cys-43-Cys-57, Cys-65-Cys-83, and Cys-77-Cys-99. An O-linked (Xyl...) (chondroitin sulfate) serine glycan is attached at Ser-156.

In terms of assembly, monomer. Post-translationally, may contain intrachain disulfide bonds. In terms of processing, O-glycosylated; contains chondroitin sulfate and dermatan sulfate. Expressed in lung, on the vascular capillary network within alveolar walls, and also at lower level in kidney.

Its subcellular location is the secreted. Functionally, involved in angiogenesis; promotes angiogenic sprouting. May have potent implications in lung endothelial cell-leukocyte interactions. In Homo sapiens (Human), this protein is Endothelial cell-specific molecule 1 (ESM1).